Here is a 188-residue protein sequence, read N- to C-terminus: Pyridoxal 5'-phosphate synthase subunit PdxT (188 aa).

Residue 47-49 (GES) participates in L-glutamine binding. The active-site Nucleophile is the C79. L-glutamine is bound by residues R106 and 134 to 135 (IR). Residues H169 and E171 each act as charge relay system in the active site.

It belongs to the glutaminase PdxT/SNO family. In terms of assembly, in the presence of PdxS, forms a dodecamer of heterodimers. Only shows activity in the heterodimer.

The catalysed reaction is aldehydo-D-ribose 5-phosphate + D-glyceraldehyde 3-phosphate + L-glutamine = pyridoxal 5'-phosphate + L-glutamate + phosphate + 3 H2O + H(+). It carries out the reaction L-glutamine + H2O = L-glutamate + NH4(+). It participates in cofactor biosynthesis; pyridoxal 5'-phosphate biosynthesis. In terms of biological role, catalyzes the hydrolysis of glutamine to glutamate and ammonia as part of the biosynthesis of pyridoxal 5'-phosphate. The resulting ammonia molecule is channeled to the active site of PdxS. This is Pyridoxal 5'-phosphate synthase subunit PdxT from Caldicellulosiruptor bescii (strain ATCC BAA-1888 / DSM 6725 / KCTC 15123 / Z-1320) (Anaerocellum thermophilum).